The primary structure comprises 200 residues: Putative AgrB-like protein (200 aa).

A run of 5 helical transmembrane segments spans residues 49–69, 88–108, 114–134, 148–168, and 171–191; these read LIITIILALLLHELVPVLVFM, LLCTILTAVTFVGVPYLIQFT, LFRFILCLLLTVPIGMFSPAV, ALKHKAIITSLVFSFLQFLVS, and LGTIIVVSLLLVFTLIVPLKG.

The protein belongs to the AgrB family.

Its subcellular location is the cell membrane. Functionally, may be involved in the proteolytic processing of a quorum sensing system signal molecule precursor. The protein is Putative AgrB-like protein of Lactiplantibacillus plantarum (strain ATCC BAA-793 / NCIMB 8826 / WCFS1) (Lactobacillus plantarum).